A 127-amino-acid chain; its full sequence is MQRTLLLAKIHNCTLTGANINYVGSISIDQILLDKSGILPYEQVQVVNNANGQRFITYAIPAPAHSGIIELNGAAARLGIIGDRVIIMTYGQFTSEELKSYTPTVVIVDEKNRPLEVRRYDDLLSQV.

The Schiff-base intermediate with substrate; via pyruvic acid role is filled by serine 25. Serine 25 is subject to Pyruvic acid (Ser). Residue threonine 57 participates in substrate binding. Tyrosine 58 acts as the Proton donor in catalysis. 73–75 (GAA) contacts substrate.

Belongs to the PanD family. In terms of assembly, heterooctamer of four alpha and four beta subunits. The cofactor is pyruvate. In terms of processing, is synthesized initially as an inactive proenzyme, which is activated by self-cleavage at a specific serine bond to produce a beta-subunit with a hydroxyl group at its C-terminus and an alpha-subunit with a pyruvoyl group at its N-terminus.

Its subcellular location is the cytoplasm. It catalyses the reaction L-aspartate + H(+) = beta-alanine + CO2. It functions in the pathway cofactor biosynthesis; (R)-pantothenate biosynthesis; beta-alanine from L-aspartate: step 1/1. In terms of biological role, catalyzes the pyruvoyl-dependent decarboxylation of aspartate to produce beta-alanine. This chain is Aspartate 1-decarboxylase, found in Trichormus variabilis (strain ATCC 29413 / PCC 7937) (Anabaena variabilis).